The sequence spans 117 residues: Ribonuclease P protein component (117 aa).

This sequence belongs to the RnpA family. As to quaternary structure, consists of a catalytic RNA component (M1 or rnpB) and a protein subunit.

The enzyme catalyses Endonucleolytic cleavage of RNA, removing 5'-extranucleotides from tRNA precursor.. Its function is as follows. RNaseP catalyzes the removal of the 5'-leader sequence from pre-tRNA to produce the mature 5'-terminus. It can also cleave other RNA substrates such as 4.5S RNA. The protein component plays an auxiliary but essential role in vivo by binding to the 5'-leader sequence and broadening the substrate specificity of the ribozyme. This is Ribonuclease P protein component from Thermotoga petrophila (strain ATCC BAA-488 / DSM 13995 / JCM 10881 / RKU-1).